We begin with the raw amino-acid sequence, 3206 residues long: Genome polyprotein (3206 aa).

The Peptidase S30 domain occupies 255–397; the sequence is KMKTESIDVL…WRKMFQIDHF (143 aa). Active-site for P1 proteinase activity residues include histidine 307, aspartate 316, and serine 348. The Involved in interaction with stylet and aphid transmission motif lies at 450–453; it reads RITC. The Involved in virions binding and aphid transmission signature appears at 708–710; it reads PTR. Residues 734-856 form the Peptidase C6 domain; that stretch reads MWIAKEGYCY…LGEMKMYRVG (123 aa). Active-site for helper component proteinase activity residues include cysteine 742 and histidine 815. Residues 1338 to 1490 enclose the Helicase ATP-binding domain; that stretch reads IAHTPDFSEY…TQFPVTIATE (153 aa). 1351 to 1358 contributes to the ATP binding site; sequence GAVGSGKS. The DECH box signature appears at 1440 to 1443; that stretch reads DECH. One can recognise a Helicase C-terminal domain in the interval 1494 to 1668; the sequence is SFDQFVQAQG…GLPVMTSNVS (175 aa). The Nuclear localization signal signature appears at 1994–2001; it reads KKGKKSGK. Position 2016 is an O-(5'-phospho-RNA)-tyrosine (tyrosine 2016). The Peptidase C4 domain maps to 2150–2368; the sequence is AASLHFGLRD…VCWGGLELLD (219 aa). Active-site for nuclear inclusion protein A activity residues include histidine 2195, aspartate 2230, and cysteine 2300. Residues 2637–2761 form the RdRp catalytic domain; sequence WLYCDADGSR…AVRPDCEFVL (125 aa). The interval 2900–2979 is disordered; sequence HYNDEGGDGS…DRDVDAGSSG (80 aa). 2 stretches are compositionally biased toward basic and acidic residues: residues 2916-2939 and 2949-2974; these read AGDETKDDERRRKEEEDRKKREES and RDNKKNKNKESDTPNKLIVKSDRDVD.

Belongs to the potyviridae genome polyprotein family. In terms of assembly, interacts with host eIF4E protein (via cap-binding region); this interaction mediates the translation of the VPg-viral RNA conjugates. Part of a complex that comprises VPg, RNA, host EIF4E and EIF4G; this interaction mediates the translation of the VPg-viral RNA conjugates. Post-translationally, VPg is uridylylated by the polymerase and is covalently attached to the 5'-end of the genomic RNA. This uridylylated form acts as a nucleotide-peptide primer for the polymerase. Potyviral RNA is expressed as two polyproteins which undergo post-translational proteolytic processing. Genome polyprotein is processed by NIa-pro, P1 and HC-pro proteinases resulting in the production of at least ten individual proteins. P3N-PIPO polyprotein is cleaved by P1 and HC-pro proteinases resulting in the production of three individual proteins. The P1 proteinase and the HC-pro cleave only their respective C-termini autocatalytically. 6K1 is essential for proper proteolytic separation of P3 from CI.

Its subcellular location is the host cytoplasmic vesicle. The protein resides in the host nucleus. It localises to the virion. The enzyme catalyses RNA(n) + a ribonucleoside 5'-triphosphate = RNA(n+1) + diphosphate. It carries out the reaction Hydrolyzes glutaminyl bonds, and activity is further restricted by preferences for the amino acids in P6 - P1' that vary with the species of potyvirus, e.g. Glu-Xaa-Xaa-Tyr-Xaa-Gln-|-(Ser or Gly) for the enzyme from tobacco etch virus. The natural substrate is the viral polyprotein, but other proteins and oligopeptides containing the appropriate consensus sequence are also cleaved.. It catalyses the reaction Hydrolyzes a Gly-|-Gly bond at its own C-terminus, commonly in the sequence -Tyr-Xaa-Val-Gly-|-Gly, in the processing of the potyviral polyprotein.. Functionally, required for aphid transmission and also has proteolytic activity. Only cleaves a Gly-Gly dipeptide at its own C-terminus. Interacts with virions and aphid stylets. Acts as a suppressor of RNA-mediated gene silencing, also known as post-transcriptional gene silencing (PTGS), a mechanism of plant viral defense that limits the accumulation of viral RNAs. May have RNA-binding activity. Its function is as follows. Has helicase activity. It may be involved in replication. Indispensable for virus replication. In terms of biological role, mediates the cap-independent, EIF4E-dependent translation of viral genomic RNAs. Binds to the cap-binding site of host EIF4E and thus interferes with the host EIF4E-dependent mRNA export and translation. VPg-RNA directly binds EIF4E and is a template for transcription. Also forms trimeric complexes with EIF4E-EIF4G, which are templates for translation. Functionally, has RNA-binding and proteolytic activities. Its function is as follows. An RNA-dependent RNA polymerase that plays an essential role in the virus replication. Involved in aphid transmission, cell-to-cell and systemis movement, encapsidation of the viral RNA and in the regulation of viral RNA amplification. This Pisum sativum (Garden pea) protein is Genome polyprotein.